Reading from the N-terminus, the 115-residue chain is uncharacterized protein (115 aa).

Transmembrane regions (helical) follow at residues 10-30 (IAIL…SFWL), 47-67 (ASGI…ATVA), and 77-97 (VHFF…AIIV).

Its subcellular location is the cell membrane. This is an uncharacterized protein from Mycoplasma genitalium (strain ATCC 33530 / DSM 19775 / NCTC 10195 / G37) (Mycoplasmoides genitalium).